The following is a 352-amino-acid chain: Chorismate synthase (352 aa).

R48 lines the NADP(+) pocket. FMN is bound by residues 125–127 (RSS), 237–238 (NA), G278, 293–297 (KPTSS), and R319.

It belongs to the chorismate synthase family. In terms of assembly, homotetramer. The cofactor is FMNH2.

It carries out the reaction 5-O-(1-carboxyvinyl)-3-phosphoshikimate = chorismate + phosphate. The protein operates within metabolic intermediate biosynthesis; chorismate biosynthesis; chorismate from D-erythrose 4-phosphate and phosphoenolpyruvate: step 7/7. Functionally, catalyzes the anti-1,4-elimination of the C-3 phosphate and the C-6 proR hydrogen from 5-enolpyruvylshikimate-3-phosphate (EPSP) to yield chorismate, which is the branch point compound that serves as the starting substrate for the three terminal pathways of aromatic amino acid biosynthesis. This reaction introduces a second double bond into the aromatic ring system. This chain is Chorismate synthase, found in Francisella tularensis subsp. mediasiatica (strain FSC147).